Reading from the N-terminus, the 376-residue chain is MQWTSLLLLAGLFSLSQAQYEDDPHWWFHYLRSQQSTYYDPYDPYPYETYEPYPYGVDEGPAYTYGSPSPPDPRDCPQECDCPPNFPTAMYCDNRNLKYLPFVPSRMKYVYFQNNQITSIQEGVFDNATGLLWIALHGNQITSDKVGRKVFSKLRHLERLYLDHNNLTRMPGPLPRSLRELHLDHNQISRVPNNALEGLENLTALYLQHNEIQEVGSSMRGLRSLILLDLSYNHLRKVPDGLPSALEQLYMEHNNVYTVPDSYFRGAPKLLYVRLSHNSLTNNGLASNTFNSSSLLELDLSYNQLQKIPPVNTNLENLYLQGNRINEFSISSFCTVVDVVNFSKLQVLRLDGNEIKRSAMPADAPLCLRLASLIEI.

Residues 1-18 form the signal peptide; the sequence is MQWTSLLLLAGLFSLSQA. Gln-19 bears the Pyrrolidone carboxylic acid mark. 7 positions are modified to sulfotyrosine: Tyr-20, Tyr-38, Tyr-39, Tyr-45, Tyr-47, Tyr-53, and Tyr-55. One can recognise an LRRNT domain in the interval 67 to 105; sequence SPSPPDPRDCPQECDCPPNFPTAMYCDNRNLKYLPFVPS. LRR repeat units lie at residues 106 to 127, 130 to 151, 156 to 176, 177 to 198, 201 to 222, 224 to 245, 246 to 266, and 269 to 289; these read RMKYVYFQNNQITSIQEGVFDN, GLLWIALHGNQITSDKVGRKVF, HLERLYLDHNNLTRMPGPLPR, SLRELHLDHNQISRVPNNALEG, NLTALYLQHNEIQEVGSSMRGL, SLILLDLSYNHLRKVPDGLPSA, LEQLYMEHNNVYTVPDSYFRG, and KLLYVRLSHNSLTNNGLASNT. N-linked (GlcNAc...) (keratan sulfate) asparagine glycosylation occurs at Asn-127. Asn-166 carries N-linked (GlcNAc...) (keratan sulfate) asparagine glycosylation. Asn-201 carries N-linked (GlcNAc...) (keratan sulfate) asparagine glycosylation. Asn-291 carries N-linked (GlcNAc...) (keratan sulfate) asparagine glycosylation. LRR repeat units lie at residues 294–315 and 316–335; these read SLLELDLSYNQLQKIPPVNTNL and ENLYLQGNRINEFSISSFCT. Cys-334 and Cys-367 are oxidised to a cystine. An N-linked (GlcNAc...) asparagine glycan is attached at Asn-341. One copy of the LRR 11 repeat lies at 344 to 365; it reads KLQVLRLDGNEIKRSAMPADAP.

Belongs to the small leucine-rich proteoglycan (SLRP) family. SLRP class II subfamily. In terms of assembly, binds to type I and type II collagen. Post-translationally, binds keratan sulfate chains.

Its subcellular location is the secreted. The protein resides in the extracellular space. The protein localises to the extracellular matrix. Affects the rate of fibrils formation. May have a primary role in collagen fibrillogenesis. The sequence is that of Fibromodulin (FMOD) from Homo sapiens (Human).